The chain runs to 202 residues: V-type proton ATPase subunit E (202 aa).

It belongs to the V-ATPase E subunit family.

In terms of biological role, produces ATP from ADP in the presence of a proton gradient across the membrane. The chain is V-type proton ATPase subunit E from Halothermothrix orenii (strain H 168 / OCM 544 / DSM 9562).